The chain runs to 388 residues: Succinate--CoA ligase [ADP-forming] subunit beta (388 aa).

Positions 9–244 constitute an ATP-grasp domain; the sequence is KALFAEYGLP…PSQDDAREAH (236 aa). Residues K46, 53 to 55, E99, T102, and E107 each bind ATP; that span reads GRG. Mg(2+) is bound by residues N199 and D213. Residues N264 and 321–323 each bind substrate; that span reads GIV.

This sequence belongs to the succinate/malate CoA ligase beta subunit family. Heterotetramer of two alpha and two beta subunits. The cofactor is Mg(2+).

It carries out the reaction succinate + ATP + CoA = succinyl-CoA + ADP + phosphate. The enzyme catalyses GTP + succinate + CoA = succinyl-CoA + GDP + phosphate. It participates in carbohydrate metabolism; tricarboxylic acid cycle; succinate from succinyl-CoA (ligase route): step 1/1. Functionally, succinyl-CoA synthetase functions in the citric acid cycle (TCA), coupling the hydrolysis of succinyl-CoA to the synthesis of either ATP or GTP and thus represents the only step of substrate-level phosphorylation in the TCA. The beta subunit provides nucleotide specificity of the enzyme and binds the substrate succinate, while the binding sites for coenzyme A and phosphate are found in the alpha subunit. This is Succinate--CoA ligase [ADP-forming] subunit beta from Shewanella halifaxensis (strain HAW-EB4).